A 443-amino-acid chain; its full sequence is Thymidine phosphorylase (443 aa).

Belongs to the thymidine/pyrimidine-nucleoside phosphorylase family. As to quaternary structure, homodimer.

The enzyme catalyses thymidine + phosphate = 2-deoxy-alpha-D-ribose 1-phosphate + thymine. It functions in the pathway pyrimidine metabolism; dTMP biosynthesis via salvage pathway; dTMP from thymine: step 1/2. Functionally, the enzymes which catalyze the reversible phosphorolysis of pyrimidine nucleosides are involved in the degradation of these compounds and in their utilization as carbon and energy sources, or in the rescue of pyrimidine bases for nucleotide synthesis. The sequence is that of Thymidine phosphorylase from Shewanella denitrificans (strain OS217 / ATCC BAA-1090 / DSM 15013).